The sequence spans 549 residues: Probable protein kinase UbiB (549 aa).

The region spanning 123–501 is the Protein kinase domain; sequence DFNETPLASA…QQQAHKSNYL (379 aa). Residues 129–137 and lysine 152 contribute to the ATP site; that span reads LASASISQV. Aspartate 287 (proton acceptor) is an active-site residue. 2 helical membrane passes run 496 to 516 and 520 to 540; these read HKSN…TLLI and ATLW…FVGW.

It belongs to the ABC1 family. UbiB subfamily.

The protein localises to the cell inner membrane. It functions in the pathway cofactor biosynthesis; ubiquinone biosynthesis [regulation]. In terms of biological role, is probably a protein kinase regulator of UbiI activity which is involved in aerobic coenzyme Q (ubiquinone) biosynthesis. In Shewanella baltica (strain OS185), this protein is Probable protein kinase UbiB.